Reading from the N-terminus, the 339-residue chain is Senescence-specific cysteine protease SAG39 (339 aa).

Residues 1 to 23 (MAMAKALLFAILGCLCLCSAVLA) form the signal peptide. 3 disulfides stabilise this stretch: C144–C187, C178–C220, and C276–C328. C147 is a catalytic residue. Active-site residues include H282 and N303.

The protein belongs to the peptidase C1 family.

The protein localises to the vacuole. Its function is as follows. Cysteine protease that may have a developmental senescence specific cell death function during apoptosis, heavy metal detoxification, and hypersensitive response. This is Senescence-specific cysteine protease SAG39 from Oryza sativa subsp. indica (Rice).